Consider the following 770-residue polypeptide: Protein PAT1 homolog 1 (770 aa).

The tract at residues 1-26 (MFRYESLEDCPLDEDEDAFQGLGEED) is disordered. Residues 1–84 (MFRYESLEDC…EMDLLGDHEE (84 aa)) are region A; interaction with DDX6/RCK. The segment at 1 to 397 (MFRYESLEDC…HRSSHQDHLR (397 aa)) is involved in nuclear foci localization. Over residues 7 to 26 (LEDCPLDEDEDAFQGLGEED) the composition is skewed to acidic residues. The region N; interaction with decapping machinery stretch occupies residues 85–388 (NLAERLSKMV…LNGAGDRGSH (304 aa)). Positions 86–95 (LAERLSKMVI) match the Nuclear export signal motif. S177 is modified (phosphoserine). T178 is subject to Phosphothreonine. Phosphoserine is present on residues S179 and S184. A Phosphothreonine modification is found at T194. R217, R223, and R263 each carry asymmetric dimethylarginine. The tract at residues 223-397 (RYPAPYGERM…HRSSHQDHLR (175 aa)) is involved in RNA-binding. S278 carries the post-translational modification Phosphoserine. R284 is subject to Asymmetric dimethylarginine. Low complexity predominate over residues 314–323 (GFRAFFSAPP). Disordered stretches follow at residues 314–344 (GFRA…QNLR) and 360–399 (QHRR…LRKD). Over residues 324-337 (SATPPPQQHPPGPG) the composition is skewed to pro residues. Over residues 367 to 380 (QRQQQNRSQHRNLN) the composition is skewed to low complexity. R385 carries the post-translational modification Omega-N-methylarginine. Residues 385-399 (RGSHRSSHQDHLRKD) show a composition bias toward basic and acidic residues. Positions 389-448 (RSSHQDHLRKDPYANLMLQREKDWVSKIQMMQLQSTDPYLDDFYYQNYFEKLEKLSAAEE) are region H. The segment at 398-770 (KDPYANLMLQ…TKLQLVQGIR (373 aa)) is involved in nuclear speckle localization. Positions 449 to 770 (IQGDGPKKER…TKLQLVQGIR (322 aa)) are region C.

It belongs to the PAT1 family. In terms of assembly, interacts (via region A) with DDX6/RCK. Interacts (via region H and region C) with LSM1 and LSM4. Interacts (via region N) with DCP1A, DCP2, EDC3, EDC4 and XRN1. Interacts with the CCR4-NOT complex. Interacts with the Lsm-containing SMN-Sm protein complex. Interacts with EIF4ENIF1/4E-T. In terms of tissue distribution, ubiquitous.

The protein localises to the cytoplasm. Its subcellular location is the P-body. The protein resides in the nucleus. It is found in the PML body. It localises to the nucleus speckle. RNA-binding protein involved in deadenylation-dependent decapping of mRNAs, leading to the degradation of mRNAs. Acts as a scaffold protein that connects deadenylation and decapping machinery. Required for cytoplasmic mRNA processing body (P-body) assembly. Functionally, (Microbial infection) In case of infection, required for translation and replication of hepatitis C virus (HCV). This Homo sapiens (Human) protein is Protein PAT1 homolog 1 (PATL1).